Reading from the N-terminus, the 281-residue chain is Nucleotide-binding protein Daro_0070 (281 aa).

8–15 (GLSGSGKS) provides a ligand contact to ATP. 57 to 60 (DARS) serves as a coordination point for GTP.

It belongs to the RapZ-like family.

In terms of biological role, displays ATPase and GTPase activities. This is Nucleotide-binding protein Daro_0070 from Dechloromonas aromatica (strain RCB).